Here is a 190-residue protein sequence, read N- to C-terminus: Movement protein TGB3 (190 aa).

Residues 1 to 52 (MDPPVILHSPNCSCQFCSSELPSTHTCGSQDRTVPLHVEATAAGHMEAKNFS) are Cytoplasmic-facing. The chain crosses the membrane as a helical span at residues 53-73 (LQYVLLVAFVSVLLGFSFCVY). Topologically, residues 74 to 166 (LKSMSNDEAS…TPCENNVLLK (93 aa)) are lumenal. A phosphotyrosine mark is found at Tyr89 and Tyr120. The Involved in plasmodesmata targeting and virus cell-to-cell movement motif lies at 89-93 (YQDLN). The helical transmembrane segment at 167–187 (LWKDDLSFTIIAVTVLVGAML) threads the bilayer. The Cytoplasmic portion of the chain corresponds to 188-190 (ARC).

This sequence belongs to the virgaviridae TGB3 movement protein family. Interacts with movement protein TGB2. TGB1-TGB3-TGB2 complex formation is enhanced by ATP hydrolysis.

The protein resides in the host cell junction. Its subcellular location is the host plasmodesma. It is found in the host endoplasmic reticulum membrane. It localises to the host cytoplasm. The protein localises to the host cytoskeleton. In terms of biological role, participates in the transport of viral genome to neighboring plant cells directly through plasmodesmata, without any budding. TGBp2 and TGBp3 are necessary for intracellular delivery of TGBp1-containing vRNPs to plasmodesmata. Can gate plasmodesmata and increase their size exclusion limit. Induces host actin cytoskeleton network thickening, which probably plays a major role in virus cell-to-cell movement. In Solanum nigrum (Black nightshade), this protein is Movement protein TGB3.